The following is a 173-amino-acid chain: ATP synthase subunit b (173 aa).

The helical transmembrane segment at 12–32 (LDVNPGLVVWTLITFLVVVLV) threads the bilayer.

This sequence belongs to the ATPase B chain family. As to quaternary structure, F-type ATPases have 2 components, F(1) - the catalytic core - and F(0) - the membrane proton channel. F(1) has five subunits: alpha(3), beta(3), gamma(1), delta(1), epsilon(1). F(0) has three main subunits: a(1), b(2) and c(10-14). The alpha and beta chains form an alternating ring which encloses part of the gamma chain. F(1) is attached to F(0) by a central stalk formed by the gamma and epsilon chains, while a peripheral stalk is formed by the delta and b chains.

It localises to the cell inner membrane. F(1)F(0) ATP synthase produces ATP from ADP in the presence of a proton or sodium gradient. F-type ATPases consist of two structural domains, F(1) containing the extramembraneous catalytic core and F(0) containing the membrane proton channel, linked together by a central stalk and a peripheral stalk. During catalysis, ATP synthesis in the catalytic domain of F(1) is coupled via a rotary mechanism of the central stalk subunits to proton translocation. Its function is as follows. Component of the F(0) channel, it forms part of the peripheral stalk, linking F(1) to F(0). This chain is ATP synthase subunit b, found in Leptospira borgpetersenii serovar Hardjo-bovis (strain JB197).